The chain runs to 805 residues: H(+)/Cl(-) exchange transporter 7 (805 aa).

Residues Met-1–Pro-49 are disordered. Topologically, residues Met-1–Arg-126 are cytoplasmic. Ser-9 and Ser-60 each carry phosphoserine. The next 2 helical transmembrane spans lie at Trp-127–Ile-159 and Phe-174–Ile-197. Positions Gly-203–Pro-207 match the Selectivity filter part_1 motif. Ser-204 provides a ligand contact to chloride. An intramembrane region (helical) is located at residues Ile-206–Leu-213. The next 2 membrane-spanning stretches (helical) occupy residues Arg-223–Gly-241 and Glu-247–Gly-264. The Selectivity filter part_2 motif lies at Gly-245–Pro-249. 2 consecutive intramembrane regions (helical) follow at residues Phe-288–Ala-300 and Pro-304–Leu-312. 5 helical membrane passes run Phe-322–Val-341, Ile-375–Arg-405, Pro-410–Ile-432, Pro-487–Leu-507, and Gly-512–Leu-535. A Selectivity filter part_3 motif is present at residues Gly-512–Pro-516. Phe-514 provides a ligand contact to chloride. The helical intramembrane region spans Gly-545–Ile-559. Residues Val-560–Met-562 constitute an intramembrane region (note=Loop between two helices). Positions Thr-563–Thr-574 form an intramembrane region, helical. An intramembrane region (note=Loop between two helices) is located at residues Ser-575–Thr-578. A helical membrane pass occupies residues Tyr-579–Phe-597. Topologically, residues Ile-598–Thr-805 are cytoplasmic. Tyr-602 provides a ligand contact to chloride. 2 CBS domains span residues Met-631 to Glu-695 and Met-741 to Glu-799. Residues His-658–Gly-660 and Thr-783–Asp-786 contribute to the ATP site. Ser-801 carries the post-translational modification Phosphoserine.

This sequence belongs to the chloride channel (TC 2.A.49) family. ClC-7/CLCN7 subfamily. As to quaternary structure, chloride channel 7 are heteromers of alpha (CLCN7) and beta (OSTM1) subunits. As to expression, brain and kidney.

The protein resides in the lysosome membrane. The catalysed reaction is 2 chloride(in) + H(+)(out) = 2 chloride(out) + H(+)(in). Its function is as follows. Slowly voltage-gated channel mediating the exchange of chloride ions against protons. Functions as antiporter and contributes to the acidification of the lysosome lumen and may be involved in maintaining lysosomal pH. The CLC channel family contains both chloride channels and proton-coupled anion transporters that exchange chloride or another anion for protons. The presence of conserved gating glutamate residues is typical for family members that function as antiporters. This chain is H(+)/Cl(-) exchange transporter 7, found in Homo sapiens (Human).